Reading from the N-terminus, the 250-residue chain is Triosephosphate isomerase (250 aa).

9-11 (NWK) is a substrate binding site. The active-site Electrophile is the His-94. Glu-166 serves as the catalytic Proton acceptor. Substrate is bound by residues Gly-172, Ser-212, and 233 to 234 (GG).

Belongs to the triosephosphate isomerase family. Homodimer.

Its subcellular location is the cytoplasm. The catalysed reaction is D-glyceraldehyde 3-phosphate = dihydroxyacetone phosphate. It functions in the pathway carbohydrate biosynthesis; gluconeogenesis. The protein operates within carbohydrate degradation; glycolysis; D-glyceraldehyde 3-phosphate from glycerone phosphate: step 1/1. Its function is as follows. Involved in the gluconeogenesis. Catalyzes stereospecifically the conversion of dihydroxyacetone phosphate (DHAP) to D-glyceraldehyde-3-phosphate (G3P). In Clostridium novyi (strain NT), this protein is Triosephosphate isomerase.